A 547-amino-acid chain; its full sequence is KsdD-like steroid dehydrogenase MSMEG_5835 (547 aa).

5 to 36 (DVIVVGAGLAGLVAACELVERGHSVIIVDQEN) contacts FAD.

The protein belongs to the FAD-dependent oxidoreductase 2 family. It depends on FAD as a cofactor.

It participates in lipid metabolism; steroid biosynthesis. Its function is as follows. Able to catalyze the elimination of the C-1 and C-2 hydrogen atoms of the A-ring from the polycyclic ring structure of 3-ketosteroids, but the ketosteroid dehydrogenase activity is low compared to KsdD in the cholesterol degradation process. The low activity could be due to different substrate specificity. This Mycolicibacterium smegmatis (strain ATCC 700084 / mc(2)155) (Mycobacterium smegmatis) protein is KsdD-like steroid dehydrogenase MSMEG_5835.